Reading from the N-terminus, the 25-residue chain is Hemocyanin subunit 3 (25 aa).

Belongs to the tyrosinase family. Hemocyanin subfamily. Hemolymph.

Its subcellular location is the secreted. The protein resides in the extracellular space. Hemocyanins are copper-containing oxygen carriers occurring freely dissolved in the hemolymph of many mollusks and arthropods. The protein is Hemocyanin subunit 3 of Maja squinado (Mediterranean spider crab).